Reading from the N-terminus, the 911-residue chain is Protein translocase subunit SecA (911 aa).

ATP contacts are provided by residues Gln-87, 105-109, and Asp-512; that span reads GEGKT. The span at 561-571 shows a compositional bias: basic and acidic residues; the sequence is RHESRRIDNQL. Residues 561–583 are disordered; the sequence is RHESRRIDNQLRGRSGRQGDPGS. 4 residues coordinate Zn(2+): Cys-895, Cys-897, Cys-906, and His-907.

The protein belongs to the SecA family. Monomer and homodimer. Part of the essential Sec protein translocation apparatus which comprises SecA, SecYEG and auxiliary proteins SecDF-YajC and YidC. The cofactor is Zn(2+).

The protein resides in the cell inner membrane. Its subcellular location is the cytoplasm. It catalyses the reaction ATP + H2O + cellular proteinSide 1 = ADP + phosphate + cellular proteinSide 2.. Part of the Sec protein translocase complex. Interacts with the SecYEG preprotein conducting channel. Has a central role in coupling the hydrolysis of ATP to the transfer of proteins into and across the cell membrane, serving both as a receptor for the preprotein-SecB complex and as an ATP-driven molecular motor driving the stepwise translocation of polypeptide chains across the membrane. The chain is Protein translocase subunit SecA from Pseudomonas putida (strain W619).